A 424-amino-acid chain; its full sequence is CinA-like protein (424 aa).

The protein belongs to the CinA family.

This is CinA-like protein from Shewanella loihica (strain ATCC BAA-1088 / PV-4).